A 236-amino-acid chain; its full sequence is Ubiquinone biosynthesis O-methyltransferase (236 aa).

Arg39, Gly59, Asp80, and Met124 together coordinate S-adenosyl-L-methionine.

The protein belongs to the methyltransferase superfamily. UbiG/COQ3 family.

The catalysed reaction is a 3-demethylubiquinol + S-adenosyl-L-methionine = a ubiquinol + S-adenosyl-L-homocysteine + H(+). It catalyses the reaction a 3-(all-trans-polyprenyl)benzene-1,2-diol + S-adenosyl-L-methionine = a 2-methoxy-6-(all-trans-polyprenyl)phenol + S-adenosyl-L-homocysteine + H(+). Its pathway is cofactor biosynthesis; ubiquinone biosynthesis. O-methyltransferase that catalyzes the 2 O-methylation steps in the ubiquinone biosynthetic pathway. This is Ubiquinone biosynthesis O-methyltransferase from Shewanella sp. (strain MR-7).